The primary structure comprises 110 residues: DNA-binding protein Mlab_1482 (110 aa).

This sequence belongs to the PDCD5 family.

In Methanocorpusculum labreanum (strain ATCC 43576 / DSM 4855 / Z), this protein is DNA-binding protein Mlab_1482.